Reading from the N-terminus, the 308-residue chain is Probable lipid phosphate phosphatase 4 (308 aa).

The next 6 membrane-spanning stretches (helical) occupy residues Trp26–His46, Ile66–Tyr86, Val93–Thr113, Ser162–Leu182, Gly193–Ile213, and Val226–Pro246. The tract at residues Met274–Phe308 is disordered. The span at Pro296–Phe308 shows a compositional bias: basic and acidic residues.

This sequence belongs to the PA-phosphatase related phosphoesterase family.

The protein localises to the membrane. In Arabidopsis thaliana (Mouse-ear cress), this protein is Probable lipid phosphate phosphatase 4 (LPP4).